The following is a 732-amino-acid chain: Elongation factor 2 (732 aa).

In terms of domain architecture, tr-type G spans 19 to 228 (ELIRNIGIVA…TKITFKDIVE (210 aa)). GTP-binding positions include 28–35 (AHIDHGKT), 94–98 (DTPGH), and 148–151 (NKID). His598 carries the post-translational modification Diphthamide.

It belongs to the TRAFAC class translation factor GTPase superfamily. Classic translation factor GTPase family. EF-G/EF-2 subfamily.

It localises to the cytoplasm. Its function is as follows. Catalyzes the GTP-dependent ribosomal translocation step during translation elongation. During this step, the ribosome changes from the pre-translocational (PRE) to the post-translocational (POST) state as the newly formed A-site-bound peptidyl-tRNA and P-site-bound deacylated tRNA move to the P and E sites, respectively. Catalyzes the coordinated movement of the two tRNA molecules, the mRNA and conformational changes in the ribosome. The chain is Elongation factor 2 (fusA) from Thermoplasma acidophilum (strain ATCC 25905 / DSM 1728 / JCM 9062 / NBRC 15155 / AMRC-C165).